Reading from the N-terminus, the 291-residue chain is tRNA pseudouridine synthase-like 1 (291 aa).

D66 acts as the Nucleophile in catalysis. Substrate is bound at residue Y130.

Belongs to the tRNA pseudouridine synthase TruA family.

The enzyme catalyses a uridine in tRNA = a pseudouridine in tRNA. The chain is tRNA pseudouridine synthase-like 1 (Pusl1) from Mus musculus (Mouse).